The following is a 179-amino-acid chain: Large ribosomal subunit protein uL5 (179 aa).

It belongs to the universal ribosomal protein uL5 family. In terms of assembly, part of the 50S ribosomal subunit; part of the 5S rRNA/L5/L18/L25 subcomplex. Contacts the 5S rRNA and the P site tRNA. Forms a bridge to the 30S subunit in the 70S ribosome.

This is one of the proteins that bind and probably mediate the attachment of the 5S RNA into the large ribosomal subunit, where it forms part of the central protuberance. In the 70S ribosome it contacts protein S13 of the 30S subunit (bridge B1b), connecting the 2 subunits; this bridge is implicated in subunit movement. Contacts the P site tRNA; the 5S rRNA and some of its associated proteins might help stabilize positioning of ribosome-bound tRNAs. This is Large ribosomal subunit protein uL5 from Dechloromonas aromatica (strain RCB).